The primary structure comprises 329 residues: Malate dehydrogenase (329 aa).

12–18 (GAAGQIG) contributes to the NAD(+) binding site. The substrate site is built by arginine 95 and arginine 101. Residues asparagine 108, glutamine 115, and 132–134 (VGN) contribute to the NAD(+) site. Positions 134 and 165 each coordinate substrate. Histidine 190 acts as the Proton acceptor in catalysis.

Belongs to the LDH/MDH superfamily. MDH type 2 family.

The catalysed reaction is (S)-malate + NAD(+) = oxaloacetate + NADH + H(+). In terms of biological role, catalyzes the reversible oxidation of malate to oxaloacetate. The polypeptide is Malate dehydrogenase (Bordetella bronchiseptica (strain ATCC BAA-588 / NCTC 13252 / RB50) (Alcaligenes bronchisepticus)).